The chain runs to 230 residues: Cytidylate kinase (230 aa).

G14 to S22 is a binding site for ATP.

Belongs to the cytidylate kinase family. Type 1 subfamily.

The protein localises to the cytoplasm. It catalyses the reaction CMP + ATP = CDP + ADP. The catalysed reaction is dCMP + ATP = dCDP + ADP. The polypeptide is Cytidylate kinase (Buchnera aphidicola subsp. Baizongia pistaciae (strain Bp)).